The sequence spans 309 residues: Clotting factor G beta subunit (309 aa).

Residues 1–31 (MDISFLVFITLSMALFSSNVTGTSVTSRVRR) form the signal peptide. Cystine bridges form between cysteine 38-cysteine 158, cysteine 74-cysteine 90, cysteine 205-cysteine 227, and cysteine 238-cysteine 268. The Peptidase S1 domain maps to 47-292 (IIGGGIATPH…YVNWLQEITF (246 aa)). The active-site Charge relay system is histidine 89. N-linked (GlcNAc...) asparagine glycosylation is present at asparagine 100. Aspartate 138 serves as the catalytic Charge relay system. The N-linked (GlcNAc...) asparagine glycan is linked to asparagine 206. Serine 242 acts as the Charge relay system in catalysis.

Belongs to the peptidase S1 family. As to quaternary structure, clotting factor G is a heterodimer composed of two non-covalently associated subunits, alpha and beta. Upon activation, converted to a two-chain active form linked by a disulfide bond. Forms a covalent heterodimer with intracellular coagulation inhibitor 3/LICI-3. As to expression, expressed in the hemocytes (at protein level).

The enzyme catalyses Selective cleavage of 98-Arg-|-Ile-99 bond in Limulus proclotting enzyme to form active clotting enzyme.. With respect to regulation, binding to (1-&gt;3)-beta-D-glucan to alpha subunit, induces autocatalysis and activation of beta subunit. Inhibited by intracellular coagulation inhibitor 3/LICI-3 and to a lesser extend by intracellular coagulation inhibitor 2/LICI-2. Its function is as follows. Component of the heterodimer clotting factor G which may play a role in defense mechanisms against fungi. Initiates a (1-&gt;3)-beta-glucan-sensing clotting pathway whereby the alpha subunit binds to glucans containing (1-&gt;3)-beta linkages, which are components of the fungal cell wall, and the beta subunit catalyzes the activation of proclotting enzyme. This Tachypleus tridentatus (Japanese horseshoe crab) protein is Clotting factor G beta subunit.